The following is a 142-amino-acid chain: Putative pre-16S rRNA nuclease (142 aa).

It belongs to the YqgF nuclease family.

Its subcellular location is the cytoplasm. In terms of biological role, could be a nuclease involved in processing of the 5'-end of pre-16S rRNA. The protein is Putative pre-16S rRNA nuclease of Staphylococcus carnosus (strain TM300).